The sequence spans 561 residues: Potassium-transporting ATPase potassium-binding subunit (561 aa).

Transmembrane regions (helical) follow at residues 4-24, 65-85, 133-153, 177-197, 253-273, 285-305, 380-400, 417-437, 484-504, and 528-548; these read IVMQDAFFVVLLLVLAVPLGI, AVSVLAFSAVGFVFVMAVLML, IGLTVQNFVSAATGIAVLFAV, LYILLPLSLILALLLVSQGVV, FTNLIEMLAILLIPVALVVMF, AIMTAMMIVFVIGVVAITISE, GLYGMIGFIILTVFIAGLLVG, MVCLLILVPPLLTLFGTAVAV, MVGAVMMLLARFIPLVAALYL, and FIGLLIGVVVLVGALSFLPAL.

It belongs to the KdpA family. In terms of assembly, the system is composed of three essential subunits: KdpA, KdpB and KdpC.

Its subcellular location is the cell membrane. Functionally, part of the high-affinity ATP-driven potassium transport (or Kdp) system, which catalyzes the hydrolysis of ATP coupled with the electrogenic transport of potassium into the cytoplasm. This subunit binds the extracellular potassium ions and delivers the ions to the membrane domain of KdpB through an intramembrane tunnel. The sequence is that of Potassium-transporting ATPase potassium-binding subunit from Listeria monocytogenes serotype 4b (strain F2365).